A 509-amino-acid polypeptide reads, in one-letter code: tRNA (guanine(37)-N(1))-methyltransferase (509 aa).

A mitochondrion-targeting transit peptide spans 1–57 (MVLWILWRPFGFSRRLLKLERHSITESKSLIPLAWTSLTQTLSESPGIFLLGQRKRF). Residues His289, 327–328 (DL), 355–356 (DG), and Asn387 contribute to the S-adenosyl-L-methionine site. A disordered region spans residues 478 to 509 (TKNPENHEDPPLKRQRTAEAFSDEKTQIASNT).

Belongs to the class I-like SAM-binding methyltransferase superfamily. TRM5/TYW2 family. In terms of assembly, monomer.

Its subcellular location is the mitochondrion matrix. It is found in the nucleus. The protein resides in the cytoplasm. It catalyses the reaction guanosine(37) in tRNA + S-adenosyl-L-methionine = N(1)-methylguanosine(37) in tRNA + S-adenosyl-L-homocysteine + H(+). Its function is as follows. Involved in mitochondrial tRNA methylation. Specifically methylates the N1 position of guanosine-37 in various tRNAs. Methylation is not dependent on the nature of the nucleoside 5' of the target nucleoside. This is the first step in the biosynthesis of wybutosine (yW), a modified base adjacent to the anticodon of tRNAs and required for accurate decoding. The polypeptide is tRNA (guanine(37)-N(1))-methyltransferase (Macaca mulatta (Rhesus macaque)).